The chain runs to 239 residues: MRTLFIGDLHLSADRLDITQAFNRFLDTELDDADALYILGDLFEVWVGDDLAAPFALELAHKLKQVSQTLPIFFIHGNRDFMLGKRFAEAAGMQLLPEVTCIELYGVKTVILHGDSLCTLDKAYQRFRKLRSFACARWLYSCLPKKRRQAIANKIRSNSQSSNQQKSYVIMDVEPSAVNALFVKTHTTRMIHGHTHRPAIHIVDNACQRIVVGDWYEQGSVLSVSANGVDLKSLPFETT.

Mn(2+) contacts are provided by D8, H10, D41, N78, and H113. 78 to 79 (NR) is a binding site for substrate. Residues D121, S159, N163, K166, and H194 each contribute to the substrate site. The Mn(2+) site is built by H194 and H196.

This sequence belongs to the LpxH family. Mn(2+) serves as cofactor.

Its subcellular location is the cell inner membrane. It catalyses the reaction UDP-2-N,3-O-bis[(3R)-3-hydroxytetradecanoyl]-alpha-D-glucosamine + H2O = 2-N,3-O-bis[(3R)-3-hydroxytetradecanoyl]-alpha-D-glucosaminyl 1-phosphate + UMP + 2 H(+). It participates in glycolipid biosynthesis; lipid IV(A) biosynthesis; lipid IV(A) from (3R)-3-hydroxytetradecanoyl-[acyl-carrier-protein] and UDP-N-acetyl-alpha-D-glucosamine: step 4/6. Its function is as follows. Hydrolyzes the pyrophosphate bond of UDP-2,3-diacylglucosamine to yield 2,3-diacylglucosamine 1-phosphate (lipid X) and UMP by catalyzing the attack of water at the alpha-P atom. Involved in the biosynthesis of lipid A, a phosphorylated glycolipid that anchors the lipopolysaccharide to the outer membrane of the cell. The sequence is that of UDP-2,3-diacylglucosamine hydrolase from Shewanella oneidensis (strain ATCC 700550 / JCM 31522 / CIP 106686 / LMG 19005 / NCIMB 14063 / MR-1).